A 403-amino-acid polypeptide reads, in one-letter code: ATP phosphoribosyltransferase regulatory subunit (403 aa).

Belongs to the class-II aminoacyl-tRNA synthetase family. HisZ subfamily. In terms of assembly, heteromultimer composed of HisG and HisZ subunits.

It is found in the cytoplasm. The protein operates within amino-acid biosynthesis; L-histidine biosynthesis; L-histidine from 5-phospho-alpha-D-ribose 1-diphosphate: step 1/9. Functionally, required for the first step of histidine biosynthesis. May allow the feedback regulation of ATP phosphoribosyltransferase activity by histidine. In Crocosphaera subtropica (strain ATCC 51142 / BH68) (Cyanothece sp. (strain ATCC 51142)), this protein is ATP phosphoribosyltransferase regulatory subunit.